Consider the following 392-residue polypeptide: ER-bound oxygenase mpaB (392 aa).

Residues 1 to 21 (MSLPLPPALSELARALPYSRT) are Lumenal-facing. Residues 22-41 (QWLPIFVGFLIGYPILIRAL) traverse the membrane as a helical segment. Residues 42–392 (RYKRHGEMKK…WSKYHATTND (351 aa)) lie on the Cytoplasmic side of the membrane. The tract at residues 352–376 (DLGQKKGPQGDPGNDEGIKDLKDGE) is disordered. The span at 367-376 (EGIKDLKDGE) shows a compositional bias: basic and acidic residues.

Belongs to the mpaB oxygenase family.

Its subcellular location is the endoplasmic reticulum membrane. It carries out the reaction 4-farnesyl-3,5-dihydroxy-6-methylphthalide + AH2 + 2 O2 = (4E,8E)-10-(4,6-dihydroxy-7-methyl-3-oxo-1,3-dihydro-2-benzofuran-5-yl)-4,8-dimethyldeca-4,8-dienoate + acetone + A + H2O + H(+). It functions in the pathway secondary metabolite biosynthesis; terpenoid biosynthesis. Functionally, ER-bound oxygenase; part of the gene cluster that mediates the biosynthesis of mycophenolic acid (MPA), the first isolated antibiotic natural product in the world obtained from a culture of Penicillium brevicompactum in 1893. MpaB catalyzes the oxidative cleavage the C19-C20 double bond in farnesyl-DHMP (FDHMP) to yield FDHMP-3C via a mycophenolic aldehyde intermediate. The first step of the pathway is the synthesis of 5-methylorsellinic acid (5MOA) by the cytosolic polyketide synthase mpaC. 5MOA is then converted to the phthalide compound 5,7-dihydroxy-4,6-dimethylphthalide (DHMP) by the endoplasmic reticulum-bound cytochrome P450 monooxygenase mpaDE. MpaDE first catalyzes hydroxylation of 5-MOA to 4,6-dihydroxy-2-(hydroxymethyl)-3-methylbenzoic acid (DHMB). MpaDE then acts as a lactone synthase that catalyzes the ring closure to convert DHMB into DHMP. The next step is the prenylation of DHMP by the Golgi apparatus-associated prenyltransferase mpaA to yield farnesyl-DHMP (FDHMP). The ER-bound oxygenase mpaB then mediates the oxidative cleavage the C19-C20 double bond in FDHMP to yield FDHMP-3C via a mycophenolic aldehyde intermediate. The O-methyltransferase mpaG catalyzes the methylation of FDHMP-3C to yield MFDHMP-3C. After the cytosolic methylation of FDHMP-3C, MFDHMP-3C enters into peroxisomes probably via free diffusion due to its low molecular weight. Upon a peroxisomal CoA ligation reaction, catalyzed by a beta-oxidation component enzyme acyl-CoA ligase ACL891, MFDHMP-3C-CoA would then be restricted to peroxisomes for the following beta-oxidation pathway steps. The peroxisomal beta-oxidation machinery than converts MFDHMP-3C-CoA into MPA_CoA, via a beta-oxidation chain-shortening process. Finally mpaH acts as a peroxisomal acyl-CoA hydrolase with high substrate specificity toward MPA-CoA to release the final product MPA. The polypeptide is ER-bound oxygenase mpaB (Penicillium brevicompactum).